Consider the following 423-residue polypeptide: MAVEYECCGTSFFIHIAVIVLLVLFAGLMSGLTLGLMSMSLVDLEVLAKSGTPRDRIHAAKILPVVKNQHLLLCTLLICNAAAMEALPIFLDALVTAWGAILISVTLILLFGEIIPQSVCSRHGLAIGATVAPFVRVLVWICLPVAWPISKLLDFLLGHGRVALFRRAELKTLVDLHGNEAGKGGELTHDETTIIAGALELSEKMAKDAMTPISDTFVIDINAKLDRDLMNLILDKGHSRVPVYYEQRTNIIGLVLVKNLLTINPDEEIQVKNVTIRRIPRVPETLPLYDILNEFQKGHSHMAVVVRQCDKIHPLQSNDAANETVNEVRVDVDYERSPQETKLKRRRSLQKWKSFPNRANSLGSRSKRWSKDNDADILQLNEHPLPKLDEEEDAVGIITMEDVIEELLQEEIFDETDHHFEDL.

The Extracellular segment spans residues 1–11 (MAVEYECCGTS). A CNNM transmembrane domain is found at 8–191 (CGTSFFIHIA…GKGGELTHDE (184 aa)). A helical membrane pass occupies residues 12–32 (FFIHIAVIVLLVLFAGLMSGL). The Cytoplasmic segment spans residues 33 to 70 (TLGLMSMSLVDLEVLAKSGTPRDRIHAAKILPVVKNQH). Residues 71–91 (LLLCTLLICNAAAMEALPIFL) form a helical membrane-spanning segment. Residues 92-94 (DAL) lie on the Extracellular side of the membrane. A helical membrane pass occupies residues 95 to 115 (VTAWGAILISVTLILLFGEII). At 116–136 (PQSVCSRHGLAIGATVAPFVR) the chain is on the cytoplasmic side. A helical transmembrane segment spans residues 137-157 (VLVWICLPVAWPISKLLDFLL). At 158-423 (GHGRVALFRR…DETDHHFEDL (266 aa)) the chain is on the extracellular side. The region spanning 210-271 (MTPISDTFVI…TINPDEEIQV (62 aa)) is the CBS 1 domain. N-linked (GlcNAc...) asparagine glycans are attached at residues N273 and N322. CBS domains lie at 275 to 332 (TIRR…RVDV) and 356 to 415 (PNRA…IFDE).

Its subcellular location is the membrane. The sequence is that of DUF21 domain-containing protein At2g14520 (CBSDUF3) from Arabidopsis thaliana (Mouse-ear cress).